Consider the following 609-residue polypeptide: Protein alan shepard (609 aa).

Pro residues predominate over residues 1–12; that stretch reads MHPRYSPAPPPL. Residues 1 to 96 are disordered; the sequence is MHPRYSPAPP…ASVAAAPPTP (96 aa). Residue Y5 is modified to Phosphotyrosine. The segment covering 13–35 has biased composition (low complexity); that stretch reads HQQQQQQPPQQQQQQMGGPHQQQ. Residues 37–50 are compositionally biased toward gly residues; sequence GGVGPGTGHGGVGA. Composition is skewed to low complexity over residues 51–68 and 83–92; these read AVGASNAGHMRAPPNSQQ and SSSAASVAAA. Y152 and Y168 each carry phosphotyrosine. Positions 190–252 are disordered; sequence PATTTYGQRV…AQNQNQQGGE (63 aa). Residues 204–252 show a composition bias toward low complexity; sequence SPSNTNSSSSSNTGSQSGTLSTSLSNTTNTNTTMGPNGTAQNQNQQGGE. 2 RRM domains span residues 257–330 and 336–415; these read TNLY…MAKQ and TNLY…FADG. The tract at residues 583-609 is disordered; sequence MTDSEQASTAASPDEAYTQYPHQAAPK.

Has a role in the perception of gravity. In Drosophila grimshawi (Hawaiian fruit fly), this protein is Protein alan shepard.